A 316-amino-acid chain; its full sequence is 4-hydroxy-3-methylbut-2-enyl diphosphate reductase (316 aa).

[4Fe-4S] cluster is bound at residue Cys12. His41 and His74 together coordinate (2E)-4-hydroxy-3-methylbut-2-enyl diphosphate. Positions 41 and 74 each coordinate dimethylallyl diphosphate. 2 residues coordinate isopentenyl diphosphate: His41 and His74. A [4Fe-4S] cluster-binding site is contributed by Cys96. (2E)-4-hydroxy-3-methylbut-2-enyl diphosphate is bound at residue His124. His124 provides a ligand contact to dimethylallyl diphosphate. Residue His124 participates in isopentenyl diphosphate binding. The Proton donor role is filled by Glu126. Thr169 provides a ligand contact to (2E)-4-hydroxy-3-methylbut-2-enyl diphosphate. Cys199 is a binding site for [4Fe-4S] cluster. Residues Ser227, Ser228, Asn229, and Ser271 each coordinate (2E)-4-hydroxy-3-methylbut-2-enyl diphosphate. Residues Ser227, Ser228, Asn229, and Ser271 each contribute to the dimethylallyl diphosphate site. Isopentenyl diphosphate-binding residues include Ser227, Ser228, Asn229, and Ser271.

Belongs to the IspH family. The cofactor is [4Fe-4S] cluster.

The catalysed reaction is isopentenyl diphosphate + 2 oxidized [2Fe-2S]-[ferredoxin] + H2O = (2E)-4-hydroxy-3-methylbut-2-enyl diphosphate + 2 reduced [2Fe-2S]-[ferredoxin] + 2 H(+). The enzyme catalyses dimethylallyl diphosphate + 2 oxidized [2Fe-2S]-[ferredoxin] + H2O = (2E)-4-hydroxy-3-methylbut-2-enyl diphosphate + 2 reduced [2Fe-2S]-[ferredoxin] + 2 H(+). It participates in isoprenoid biosynthesis; dimethylallyl diphosphate biosynthesis; dimethylallyl diphosphate from (2E)-4-hydroxy-3-methylbutenyl diphosphate: step 1/1. It functions in the pathway isoprenoid biosynthesis; isopentenyl diphosphate biosynthesis via DXP pathway; isopentenyl diphosphate from 1-deoxy-D-xylulose 5-phosphate: step 6/6. Catalyzes the conversion of 1-hydroxy-2-methyl-2-(E)-butenyl 4-diphosphate (HMBPP) into a mixture of isopentenyl diphosphate (IPP) and dimethylallyl diphosphate (DMAPP). Acts in the terminal step of the DOXP/MEP pathway for isoprenoid precursor biosynthesis. This chain is 4-hydroxy-3-methylbut-2-enyl diphosphate reductase, found in Xanthomonas axonopodis pv. citri (strain 306).